We begin with the raw amino-acid sequence, 94 residues long: MSDRVRVHVWIRGRVQGVGFRAHTEAMALHAGVQGWVRNLRDGRVEAVFEGSPAAVEAMLRWCQQGSPGSVVEAIEQRSEPPEGLPTFEIRPTV.

The region spanning 6–92 (RVHVWIRGRV…EGLPTFEIRP (87 aa)) is the Acylphosphatase-like domain. Residues Arg21 and Asn39 contribute to the active site.

This sequence belongs to the acylphosphatase family.

The catalysed reaction is an acyl phosphate + H2O = a carboxylate + phosphate + H(+). The sequence is that of Acylphosphatase (acyP) from Synechococcus sp. (strain JA-2-3B'a(2-13)) (Cyanobacteria bacterium Yellowstone B-Prime).